We begin with the raw amino-acid sequence, 206 residues long: dCTP deaminase, dUMP-forming (206 aa).

Residues 117–122 (RSSFGR), D135, 143–145 (TLE), Q163, Y177, K184, and Q188 contribute to the dCTP site. The active-site Proton donor/acceptor is the E145.

Belongs to the dCTP deaminase family. As to quaternary structure, homotrimer.

The catalysed reaction is dCTP + 2 H2O = dUMP + NH4(+) + diphosphate. It functions in the pathway pyrimidine metabolism; dUMP biosynthesis; dUMP from dCTP: step 1/1. Bifunctional enzyme that catalyzes both the deamination of dCTP to dUTP and the hydrolysis of dUTP to dUMP without releasing the toxic dUTP intermediate. The sequence is that of dCTP deaminase, dUMP-forming from Methanococcus maripaludis (strain C5 / ATCC BAA-1333).